Consider the following 318-residue polypeptide: Mitochondrial thiamine pyrophosphate carrier (318 aa).

Solcar repeat units follow at residues 13 to 106 (ISNV…LTEL), 116 to 202 (RDFS…LKRA), and 214 to 309 (NGNF…FCNF). Residues 19 to 39 (AVAGSVSGLVTRVLISPLDVI) form a helical membrane-spanning segment. At S51 the chain carries Phosphoserine. 4 consecutive transmembrane segments (helical) span residues 87-107 (LLSI…TELV), 122-142 (FLCG…VDVL), 173-193 (VFYK…GFQF), and 220-240 (LLCG…LDLF). The Substrate recognition signature appears at 241-246 (KKRLQV). Residues 293-313 (ALSTGLVFFWYELFCNFFHHM) traverse the membrane as a helical segment.

Belongs to the mitochondrial carrier (TC 2.A.29) family.

Its subcellular location is the mitochondrion membrane. The catalysed reaction is thiamine phosphate(out) + thiamine diphosphate(in) = thiamine phosphate(in) + thiamine diphosphate(out). In terms of biological role, mitochondrial transporter mediating uptake of thiamine diphosphate into mitochondria. It is not clear if the antiporter activity is affected by the membrane potential or by the proton electrochemical gradient. The chain is Mitochondrial thiamine pyrophosphate carrier (SLC25A19) from Bos taurus (Bovine).